Consider the following 940-residue polypeptide: Mating-type protein A-alpha Z4 (940 aa).

The segment at residues 110 to 182 (GAELSATPLP…AARARMGWGD (73 aa)) is a DNA-binding region (homeobox; TALE-type). Disordered regions lie at residues 333-618 (KQRQ…TGDP), 633-762 (PRDL…GLRP), 832-863 (GQKA…SSLV), and 877-912 (EAPK…DTVR). Residues 337–360 (ARREQRRAQKDRMDAQRRAEDRKC) are compositionally biased toward basic and acidic residues. 2 stretches are compositionally biased toward acidic residues: residues 376 to 400 (ESDE…DGED) and 427 to 469 (ATED…EEEE). 3 stretches are compositionally biased toward low complexity: residues 516 to 531 (PSSR…SPSP), 582 to 611 (VRSR…PSGG), and 657 to 693 (SRSL…SDAT). The span at 694–703 (DITEPDEATT) shows a compositional bias: acidic residues. The span at 704 to 724 (ADETTTQSTSASSSRDTTSQQ) shows a compositional bias: low complexity. A compositionally biased stretch (basic and acidic residues) spans 877–896 (EAPKPAKAPKNDRRYLERRE).

The protein belongs to the TALE/M-ATYP homeobox family.

The protein resides in the nucleus. Its function is as follows. Specifies A-alpha-4 mating-type. May regulate the expression of genes specific to the homokaryotic cell type. This chain is Mating-type protein A-alpha Z4, found in Schizophyllum commune (Split gill fungus).